The following is a 355-amino-acid chain: Iron deficiency-induced protein A (355 aa).

The segment at residues 1–34 (MEKVGRRVFLGMGAAATAYVTHHLWNQNAESSYA) is a signal peptide (tat-type signal). Residues H49, Y50, Y180, Y236, and Y237 each contribute to the Fe cation site.

It belongs to the bacterial solute-binding protein 1 family. Post-translationally, predicted to be exported by the Tat system. The position of the signal peptide cleavage has not been experimentally proven.

It localises to the cellular thylakoid membrane. In terms of biological role, plays an important role in protecting the acceptor side of photosystem II (PSII) against oxidative damage, especially under iron-limiting growth conditions. Functionally, may also be part of a periplasmic ABC transporter complex involved in iron import. This is Iron deficiency-induced protein A (idiA) from Thermosynechococcus vestitus (strain NIES-2133 / IAM M-273 / BP-1).